Consider the following 199-residue polypeptide: MTKVLVLYYSTYGHIETMAEAVAEGVRAAGAQADIKRVPETVPEDVARTHHFKLDQAAPIATPADLEAYDAIIVGTPTRFGRMASQMASFWDQTGGLWMKGALIGKVGAAFTSTATQHGGQETTLFSVITNLLHQGMVISGLPYNFQGQMRLDEITGGAPYGATTIAAGDGSRAVSDNERDGARFLGQHVAQIAAKLSA.

In terms of domain architecture, Flavodoxin-like spans 4-190 (VLVLYYSTYG…DGARFLGQHV (187 aa)). Residues 10-15 (STYGHI) and 78-80 (TRF) each bind FMN. Tyr-12 lines the NAD(+) pocket. Trp-98 is a substrate binding site. Residues 113-119 (STATQHG) and His-134 each bind FMN.

The protein belongs to the WrbA family. The cofactor is FMN.

It carries out the reaction a quinone + NADH + H(+) = a quinol + NAD(+). It catalyses the reaction a quinone + NADPH + H(+) = a quinol + NADP(+). This is NAD(P)H dehydrogenase (quinone) from Gluconacetobacter diazotrophicus (strain ATCC 49037 / DSM 5601 / CCUG 37298 / CIP 103539 / LMG 7603 / PAl5).